The primary structure comprises 790 residues: Cadherin-6 (790 aa).

The first 30 residues, 1 to 30 (MRTYHCFWLLFWAGQPHQSFLTLLSKRTSG), serve as a signal peptide directing secretion. A propeptide spanning residues 31–53 (FPEKEKVLVLSGNSRRDLSRSKR) is cleaved from the precursor. Cadherin domains lie at 54 to 159 (SWMW…EPMF), 160 to 268 (TKDV…PPRF), 269 to 383 (PQST…PPVF), 384 to 486 (SRPA…DNAP), and 487 to 608 (EFAM…LIHP). At 54-615 (SWMWNQFFLL…IHPTGLSTGA (562 aa)) the chain is on the extracellular side. Residues N165 and N255 are each glycosylated (N-linked (GlcNAc...) asparagine). The interval 261 to 289 (VNDNPPRFPQSTYQFRAPESTPPDSPIGR) is disordered. Residues N437, N455, and N536 are each glycosylated (N-linked (GlcNAc...) asparagine). A helical transmembrane segment spans residues 616–636 (LIAILLCIIILLVTVVLFAAL). The Cytoplasmic portion of the chain corresponds to 637–790 (RRQRKKEPLI…YGSMDSDKDS (154 aa)).

The protein resides in the cell membrane. In terms of biological role, cadherins are calcium-dependent cell adhesion proteins. They preferentially interact with themselves in a homophilic manner in connecting cells; cadherins may thus contribute to the sorting of heterogeneous cell types. The sequence is that of Cadherin-6 (CDH6) from Gallus gallus (Chicken).